We begin with the raw amino-acid sequence, 281 residues long: Polyamine aminopropyltransferase (281 aa).

The PABS domain maps to 2 to 237 (EIWYTEKLEL…GIIGFTFLSN (236 aa)). Residue Gln-33 coordinates S-methyl-5'-thioadenosine. Spermidine contacts are provided by His-64 and Asp-88. S-methyl-5'-thioadenosine is bound by residues Glu-108 and 139–140 (DG). Asp-157 serves as the catalytic Proton acceptor. 157–160 (DSSD) lines the spermidine pocket. Pro-164 lines the S-methyl-5'-thioadenosine pocket.

Belongs to the spermidine/spermine synthase family. In terms of assembly, homodimer or homotetramer.

Its subcellular location is the cytoplasm. It carries out the reaction S-adenosyl 3-(methylsulfanyl)propylamine + putrescine = S-methyl-5'-thioadenosine + spermidine + H(+). Its pathway is amine and polyamine biosynthesis; spermidine biosynthesis; spermidine from putrescine: step 1/1. In terms of biological role, catalyzes the irreversible transfer of a propylamine group from the amino donor S-adenosylmethioninamine (decarboxy-AdoMet) to putrescine (1,4-diaminobutane) to yield spermidine. In Leptospira biflexa serovar Patoc (strain Patoc 1 / Ames), this protein is Polyamine aminopropyltransferase.